The following is a 421-amino-acid chain: Testin (421 aa).

Residues methionine 92–asparagine 199 form the PET domain. Disordered stretches follow at residues glutamate 133 to cysteine 164 and lysine 193 to arginine 213. The span at proline 155–cysteine 164 shows a compositional bias: basic and acidic residues. 3 LIM zinc-binding domains span residues tyrosine 234–glutamate 297, proline 299–valine 359, and glutamine 362–serine 421.

This sequence belongs to the prickle / espinas / testin family. Interacts via LIM domain 1 with ZYX. Interacts (via LIM domain 3) with ENAH and VASP. Interacts with ALKBH4, talin, actin, alpha-actinin, GRIP1 and PXN. Interacts (via LIM domain 2) with ACTL7A (via N-terminus). Heterodimer with ACTL7A; the heterodimer interacts with ENAH to form a heterotrimer.

The protein resides in the cytoplasm. It localises to the cell junction. Its subcellular location is the focal adhesion. Its function is as follows. Scaffold protein that may play a role in cell adhesion, cell spreading and in the reorganization of the actin cytoskeleton. Plays a role in the regulation of cell proliferation. May act as a tumor suppressor. This chain is Testin (TES), found in Ovis aries (Sheep).